A 293-amino-acid polypeptide reads, in one-letter code: Cep170-like protein (293 aa).

2 disordered regions span residues 78–110 and 217–270; these read PPLV…LTIT and FPSA…AESE. Polar residues predominate over residues 227-245; sequence KQKSSPVNNHHSPGQTPTL.

Belongs to the CEP170 family.

The chain is Cep170-like protein (CEP170P1) from Homo sapiens (Human).